The chain runs to 910 residues: Inactive disease susceptibility protein LOV1 (910 aa).

A coiled-coil region spans residues 22–60; the sequence is ARLNGIGEQVDGLKRQLGRLQSLLKDADAKKHESERVRN. Positions 169–461 constitute an NB-ARC domain; sequence EQSVEALAGH…AAEGIITSSD (293 aa). LRR repeat units lie at residues 584–609, 610–632, and 634–655; these read LPLL…IGDL, IHLR…LRNL, and LLLY…LKEM.

Belongs to the disease resistance NB-LRR family. RPP8/HRT subfamily.

The chain is Inactive disease susceptibility protein LOV1 (LOV1) from Arabidopsis thaliana (Mouse-ear cress).